A 1003-amino-acid chain; its full sequence is Calcium-transporting ATPase sarcoplasmic/endoplasmic reticulum type (1003 aa).

The Cytoplasmic segment spans residues 1-59; the sequence is MEDAHAKKWEEVVDYFGVDPERGLALEQVKKNQEKYGPNELPAEEGKSLLTLILEQFDD. Residues 60-78 form a helical membrane-spanning segment; the sequence is LLVKILLLAAIISLVLALF. The Extracellular portion of the chain corresponds to 79 to 89; the sequence is EEHDDEAEQLT. A helical membrane pass occupies residues 90–110; the sequence is AYVEPFVILLILIANAVVGVW. Topologically, residues 111-262 are cytoplasmic; the sequence is QEKNAESAIE…QQKLDEFGEQ (152 aa). The helical transmembrane segment at 263–282 threads the bilayer; it reads LSKVISVICVAVWAINIGHF. At 283–300 the chain is on the extracellular side; that stretch reads NDPAHGGSWIKGAIYYFK. A helical membrane pass occupies residues 301–318; it reads IAVALAVAAIPEGLPAVI. Residues 319–775 lie on the Cytoplasmic side of the membrane; it reads TTCLALGTRR…RYLISSNIGE (457 aa). Aspartate 354 acts as the 4-aspartylphosphate intermediate in catalysis. Lysine 519 is an ATP binding site. A helical transmembrane segment spans residues 776–799; the sequence is VVSIFLTAALGLPEALIPVQLLWV. The Extracellular portion of the chain corresponds to 800–840; sequence NLVTDGLPATALGFNPPDLDIMNKPPRRADEGLITGWLFFR. A helical transmembrane segment spans residues 841 to 863; the sequence is YMAIGTYVGAATVGAAAHWFMMS. Over 864–898 the chain is Cytoplasmic; that stretch reads PTGPGLNFYQLSHHLQCTPENEYFEGIDCEIFSDP. A helical transmembrane segment spans residues 899 to 917; that stretch reads HPMTMALSVLVTIEMLNAI. Over 918–934 the chain is Extracellular; it reads NSLSENQSLLVMPPWSN. A helical membrane pass occupies residues 935–954; it reads IWLISAICLSMTLHFVILYV. Over 955–1003 the chain is Cytoplasmic; the sequence is EILSTVFQICPLTLTEWIVVLKISFPVLLLDEVLKFVARKYTDEFSFIK.

The protein belongs to the cation transport ATPase (P-type) (TC 3.A.3) family.

It localises to the sarcoplasmic reticulum membrane. It carries out the reaction Ca(2+)(in) + ATP + H2O = Ca(2+)(out) + ADP + phosphate + H(+). Functionally, this magnesium-dependent enzyme catalyzes the hydrolysis of ATP coupled with the transport of the calcium. The protein is Calcium-transporting ATPase sarcoplasmic/endoplasmic reticulum type of Artemia franciscana (Brine shrimp).